We begin with the raw amino-acid sequence, 600 residues long: Cytidine monophosphate-N-acetylneuraminic acid hydroxylase (600 aa).

Positions 9 to 107 constitute a Rieske domain; it reads LSPVEVASLK…VEMDENNRLL (99 aa). Positions 49, 51, 70, and 73 each coordinate [2Fe-2S] cluster.

The protein belongs to the CMP-Neu5Ac hydroxylase family. The cofactor is [2Fe-2S] cluster.

It is found in the cytoplasm. The enzyme catalyses CMP-N-acetyl-beta-neuraminate + 2 Fe(II)-[cytochrome b5] + O2 + 2 H(+) = CMP-N-glycoloyl-beta-neuraminate + 2 Fe(III)-[cytochrome b5] + H2O. It functions in the pathway amino-sugar metabolism; N-acetylneuraminate metabolism. Its function is as follows. Sialic acids are components of carbohydrate chains of glycoconjugates and are involved in cell-cell recognition and cell-pathogen interactions. Catalyzes the conversion of CMP-N-acetylneuraminic acid (CMP-Neu5Ac) into its hydroxylated derivative CMP-N-glycolylneuraminic acid (CMP-Neu5Gc), a sialic acid abundantly expressed at the surface of many cells. This chain is Cytidine monophosphate-N-acetylneuraminic acid hydroxylase (CMAH), found in Pan paniscus (Pygmy chimpanzee).